The primary structure comprises 196 residues: Cell division protein SepF (196 aa).

The disordered stretch occupies residues 15-80 (VEDDEEFNEP…PKRSASTFSK (66 aa)). Polar residues predominate over residues 56-79 (RPAQSTPKPQAQTAAPKRSASTFS).

It belongs to the SepF family. In terms of assembly, homodimer. Interacts with FtsZ.

It localises to the cytoplasm. In terms of biological role, cell division protein that is part of the divisome complex and is recruited early to the Z-ring. Probably stimulates Z-ring formation, perhaps through the cross-linking of FtsZ protofilaments. Its function overlaps with FtsA. This Lactococcus lactis subsp. cremoris (strain SK11) protein is Cell division protein SepF.